The chain runs to 444 residues: MREILHVQAGQCGNQIGGKFWEVVSDEHGIDPKGNYVGTSRVQLERVNVYYNEASGGRYVPRAVLMDLEPGTMDSLRTGPHGQLFRPDNFIFGQNGAGNNWAKGHYTEGAELIDSVLDVVRKEAENCACLQGFQICHSLGGGTGSGMGTLLISKIKEEYPDRMMLTFSVFPSPKVSDTVVEPYNATLSVHQLVENGDECMVLDNEALYDICFRTLKLTNPSFGDLNRLISTTMSGATCCLRFPGQLNSDLRKLAVNLIPFPRLHFFMVGFAPLTSSSSQQYRALTIPELTQQMWDARNMMCAADPRHGRYLTASAMFRGKMSTKEVDEQMINVQNKNSSYFVEWIPNNVKSSVCDIPPTGLTMSSTFMGNSTSIQEMFRRVSEQFTVMFRRKAFLHWYTGEGMDEMEFTEAESNMNDLVSEYQQYQDAVADDNDEDYEDEAMEN.

Residues Q11, E69, S138, G142, T143, G144, N204, and N226 each contribute to the GTP site. Position 69 (E69) interacts with Mg(2+).

This sequence belongs to the tubulin family. Dimer of alpha and beta chains. A typical microtubule is a hollow water-filled tube with an outer diameter of 25 nm and an inner diameter of 15 nM. Alpha-beta heterodimers associate head-to-tail to form protofilaments running lengthwise along the microtubule wall with the beta-tubulin subunit facing the microtubule plus end conferring a structural polarity. Microtubules usually have 13 protofilaments but different protofilament numbers can be found in some organisms and specialized cells. Mg(2+) is required as a cofactor.

Its subcellular location is the cytoplasm. The protein localises to the cytoskeleton. Its function is as follows. Tubulin is the major constituent of microtubules, a cylinder consisting of laterally associated linear protofilaments composed of alpha- and beta-tubulin heterodimers. Microtubules grow by the addition of GTP-tubulin dimers to the microtubule end, where a stabilizing cap forms. Below the cap, tubulin dimers are in GDP-bound state, owing to GTPase activity of alpha-tubulin. The protein is Tubulin beta-7 chain of Gossypium hirsutum (Upland cotton).